The sequence spans 445 residues: Probable multidrug resistance protein YpnP (445 aa).

The next 12 helical transmembrane spans lie at 15–35 (LVLFSMPIMLGNALQVSFQFI), 49–69 (LGAAAVSSTIVLTVLSFILGL), 95–115 (AFVVLLTGLSIGFGAAGFFLS), 136–156 (LQIQFIGILFLFGYNFISTVL), 168–188 (FIAFAVVLNTVLAPLFISVFR), 194–214 (AAYSTILSQGIAFLYGLFYVI), 240–260 (IPAGLQMMVITGGMMAIMSVV), 277–297 (LDSIITLPAMAAGTAVNSMAG), 314–334 (LGVIAVISCMLVIAVMIWVFG), 355–375 (LKWIAFFYPFIGVNFVLNGIV), 384–404 (VLVLNLISFWVLRYPFTALFS), and 411–431 (GIGLGIGMSFLFSSCAAFLYY).

It belongs to the multi antimicrobial extrusion (MATE) (TC 2.A.66.1) family.

It is found in the cell membrane. The sequence is that of Probable multidrug resistance protein YpnP (ypnP) from Bacillus subtilis (strain 168).